The primary structure comprises 267 residues: 5'-nucleotidase SurE (267 aa).

4 residues coordinate a divalent metal cation: Asp-9, Asp-10, Ser-40, and Asn-97.

This sequence belongs to the SurE nucleotidase family. A divalent metal cation is required as a cofactor.

It localises to the cytoplasm. The enzyme catalyses a ribonucleoside 5'-phosphate + H2O = a ribonucleoside + phosphate. Functionally, nucleotidase that shows phosphatase activity on nucleoside 5'-monophosphates. This chain is 5'-nucleotidase SurE, found in Helicobacter pylori (strain G27).